Reading from the N-terminus, the 423-residue chain is UDP-N-acetylglucosamine 1-carboxyvinyltransferase (423 aa).

Residue 22-23 participates in phosphoenolpyruvate binding; it reads KN. Arginine 98 provides a ligand contact to UDP-N-acetyl-alpha-D-glucosamine. The active-site Proton donor is cysteine 122. Cysteine 122 is subject to 2-(S-cysteinyl)pyruvic acid O-phosphothioketal. UDP-N-acetyl-alpha-D-glucosamine is bound by residues 127-131, aspartate 311, and isoleucine 333; that span reads RPVDQ.

Belongs to the EPSP synthase family. MurA subfamily.

It localises to the cytoplasm. The enzyme catalyses phosphoenolpyruvate + UDP-N-acetyl-alpha-D-glucosamine = UDP-N-acetyl-3-O-(1-carboxyvinyl)-alpha-D-glucosamine + phosphate. The protein operates within cell wall biogenesis; peptidoglycan biosynthesis. Cell wall formation. Adds enolpyruvyl to UDP-N-acetylglucosamine. This Stenotrophomonas maltophilia (strain R551-3) protein is UDP-N-acetylglucosamine 1-carboxyvinyltransferase.